Reading from the N-terminus, the 189-residue chain is HGPRTase-like protein 1 (189 aa).

The protein belongs to the purine/pyrimidine phosphoribosyltransferase family. Archaeal HPRT subfamily.

Its function is as follows. May catalyze a purine salvage reaction, the substrate is unknown. This Natrialba magadii (strain ATCC 43099 / DSM 3394 / CCM 3739 / CIP 104546 / IAM 13178 / JCM 8861 / NBRC 102185 / NCIMB 2190 / MS3) (Natronobacterium magadii) protein is HGPRTase-like protein 1.